We begin with the raw amino-acid sequence, 90 residues long: Small ribosomal subunit protein uS19 (90 aa).

It belongs to the universal ribosomal protein uS19 family.

In terms of biological role, protein S19 forms a complex with S13 that binds strongly to the 16S ribosomal RNA. The sequence is that of Small ribosomal subunit protein uS19 from Methylococcus capsulatus (strain ATCC 33009 / NCIMB 11132 / Bath).